Here is a 237-residue protein sequence, read N- to C-terminus: tRNA (guanine-N(7)-)-methyltransferase (237 aa).

4 residues coordinate S-adenosyl-L-methionine: aspartate 35, glutamate 60, asparagine 87, and aspartate 113. Aspartate 113 is an active-site residue. The substrate site is built by lysine 117 and aspartate 149.

This sequence belongs to the class I-like SAM-binding methyltransferase superfamily. TrmB family.

It carries out the reaction guanosine(46) in tRNA + S-adenosyl-L-methionine = N(7)-methylguanosine(46) in tRNA + S-adenosyl-L-homocysteine. The protein operates within tRNA modification; N(7)-methylguanine-tRNA biosynthesis. Its function is as follows. Catalyzes the formation of N(7)-methylguanine at position 46 (m7G46) in tRNA. This chain is tRNA (guanine-N(7)-)-methyltransferase, found in Synechococcus sp. (strain WH7803).